Reading from the N-terminus, the 468-residue chain is 6-phosphogluconate dehydrogenase, decarboxylating (468 aa).

Residues 10 to 15 (GMAVMG), 33 to 35 (NRS), 74 to 76 (IKS), and Asn102 each bind NADP(+). Residues Asn102 and 128–130 (SGG) contribute to the substrate site. The active-site Proton acceptor is the Lys182. 185–186 (HN) is a substrate binding site. The active-site Proton donor is the Glu189. Substrate contacts are provided by Tyr190, Lys259, Arg286, Arg445, and His451.

This sequence belongs to the 6-phosphogluconate dehydrogenase family. In terms of assembly, homodimer.

The catalysed reaction is 6-phospho-D-gluconate + NADP(+) = D-ribulose 5-phosphate + CO2 + NADPH. Its pathway is carbohydrate degradation; pentose phosphate pathway; D-ribulose 5-phosphate from D-glucose 6-phosphate (oxidative stage): step 3/3. Its function is as follows. Catalyzes the oxidative decarboxylation of 6-phosphogluconate to ribulose 5-phosphate and CO(2), with concomitant reduction of NADP to NADPH. This is 6-phosphogluconate dehydrogenase, decarboxylating (gnd) from Buchnera aphidicola subsp. Baizongia pistaciae (strain Bp).